Here is a 643-residue protein sequence, read N- to C-terminus: Zinc finger protein 23 (643 aa).

The region spanning 1–43 is the KRAB domain; sequence MLENYGNVASLGFPLLKPAVISQLEGGSELGGSSPLAAGTGLQ. Residue lysine 157 forms a Glycyl lysine isopeptide (Lys-Gly) (interchain with G-Cter in SUMO2) linkage. Residues 168 to 190 form a C2H2-type 1; degenerate zinc finger; the sequence is FKCEELVEPFRCDSQLIQHQENN. C2H2-type zinc fingers lie at residues 196-218, 224-246, 252-274, 280-302, 308-330, 336-358, 364-386, 392-414, 420-442, 448-470, 476-498, 504-526, 532-554, 560-582, 588-610, and 616-638; these read YQCSECGKAFSINEKLIWHQRLH, FKCVECGKSFSYSSHYITHQTIH, YQCKMCGKAFSVNGSLSRHQRIH, YQCKECGNGFSCSSAYITHQRVH, YECNDCGKAFNVNAKLIQHQRIH, YECNECGKGFRCSSQLRQHQSIH, YQCKECGKGFNNNTKLIQHQRIH, YECTECGKAFSVKGKLIQHQRIH, YECNECGKAFRCNSQFRQHLRIH, YECNECGKAFSVNGKLMRHQRIH, FECNECGRCFTSKRNLLDHHRIH, YQCKECGKAFSINAKLTRHQRIH, FKCMECEKAFSCSSNYIVHQRIH, FQCKECGKAFHVNAHLIRHQRSH, FRCVECGKGFSFSSDYIIHQTVH, and YMCSVCGKAFRFSFQLSQHQSVH.

The protein belongs to the krueppel C2H2-type zinc-finger protein family.

It is found in the nucleus. In terms of biological role, may be involved in transcriptional regulation. May have a role in embryonic development. This chain is Zinc finger protein 23 (ZNF23), found in Homo sapiens (Human).